The chain runs to 301 residues: ATP synthase gamma chain (301 aa).

It belongs to the ATPase gamma chain family. F-type ATPases have 2 components, CF(1) - the catalytic core - and CF(0) - the membrane proton channel. CF(1) has five subunits: alpha(3), beta(3), gamma(1), delta(1), epsilon(1). CF(0) has three main subunits: a, b and c.

It is found in the cell inner membrane. In terms of biological role, produces ATP from ADP in the presence of a proton gradient across the membrane. The gamma chain is believed to be important in regulating ATPase activity and the flow of protons through the CF(0) complex. In Helicobacter pylori (strain G27), this protein is ATP synthase gamma chain.